An 86-amino-acid polypeptide reads, in one-letter code: Sodium channel neurotoxin MeuNaTxalpha-5 (86 aa).

The first 19 residues, 1–19, serve as a signal peptide directing secretion; it reads MNYLILISFALLVITGVES. One can recognise an LCN-type CS-alpha/beta domain in the interval 21–85; that stretch reads RDAYIAKPHN…VPIRIPGKCH (65 aa). Disulfide bonds link C31–C84, C35–C57, C43–C67, and C47–C69. R86 is a propeptide (removed by a carboxypeptidase).

This sequence belongs to the long (4 C-C) scorpion toxin superfamily. Sodium channel inhibitor family. Alpha subfamily. In terms of tissue distribution, expressed by the venom gland.

The protein resides in the secreted. In terms of biological role, alpha toxins bind voltage-independently at site-3 of sodium channels (Nav) and inhibit the inactivation of the activated channels, thereby blocking neuronal transmission. This toxin inhibits inactivation of Nav1.6/SCN8A (EC(50)=790 nM) and drosophila DmNav1 (EC(50)=280 nM). The toxin (1 uM) does not significantly shift the midpoint of activation at the two channels, but induces a significant depolarizing shift in the V(1/2) of inactivation of the channels. Has antimicrobial activity. The protein is Sodium channel neurotoxin MeuNaTxalpha-5 of Mesobuthus eupeus (Lesser Asian scorpion).